Reading from the N-terminus, the 135-residue chain is MPTINQLVRKGRHSKVTKSKSPALNYSYNSMKKESVFNPAPQMRGVATRVGTMTPKKPNSALRKYARVRLSNLIEVTAYIPGEGHNLQEHSVVLIRGGRVKDLPGVRYHIIRGALDTAGVDGRKQSRSKYGTKKD.

Residues 1–20 are disordered; that stretch reads MPTINQLVRKGRHSKVTKSK. Over residues 9–18 the composition is skewed to basic residues; the sequence is RKGRHSKVTK. Asp-102 is subject to 3-methylthioaspartic acid.

It belongs to the universal ribosomal protein uS12 family. Part of the 30S ribosomal subunit. Contacts proteins S8 and S17. May interact with IF1 in the 30S initiation complex.

Its function is as follows. With S4 and S5 plays an important role in translational accuracy. In terms of biological role, interacts with and stabilizes bases of the 16S rRNA that are involved in tRNA selection in the A site and with the mRNA backbone. Located at the interface of the 30S and 50S subunits, it traverses the body of the 30S subunit contacting proteins on the other side and probably holding the rRNA structure together. The combined cluster of proteins S8, S12 and S17 appears to hold together the shoulder and platform of the 30S subunit. This is Small ribosomal subunit protein uS12 from Lactobacillus helveticus (strain DPC 4571).